The primary structure comprises 130 residues: Astrocytic phosphoprotein PEA-15 (130 aa).

One can recognise a DED domain in the interval 3 to 81 (EYGTLLQDLT…RPDLLTMVVD (79 aa)). S61, S90, S104, and S116 each carry phosphoserine. The tract at residues 98–107 (KLTRIPSAKK) is microtubule-binding. Residues 122–129 (KLAPPPKK) are microtubule-binding.

In terms of assembly, binds RPS6KA3, MAPK3 and MAPK1. Transient interaction with PLD1 and PLD2. Interacts with CASP8 and FADD. In terms of processing, phosphorylated by protein kinase C and calcium-calmodulin-dependent protein kinase. These phosphorylation events are modulated by neurotransmitters or hormones. In terms of tissue distribution, ubiquitously expressed. Most abundant in tissues such as heart, brain, muscle and adipose tissue which utilize glucose as an energy source. Lower expression in glucose-producing tissues. Higher levels of expression are found in tissues from individuals with type 2 diabetes than in controls.

It localises to the cytoplasm. Functionally, blocks Ras-mediated inhibition of integrin activation and modulates the ERK MAP kinase cascade. Inhibits RPS6KA3 activities by retaining it in the cytoplasm. Inhibits both TNFRSF6- and TNFRSF1A-mediated CASP8 activity and apoptosis. Regulates glucose transport by controlling both the content of SLC2A1 glucose transporters on the plasma membrane and the insulin-dependent trafficking of SLC2A4 from the cell interior to the surface. This chain is Astrocytic phosphoprotein PEA-15 (PEA15), found in Homo sapiens (Human).